We begin with the raw amino-acid sequence, 85 residues long: MKAGIHPAYRPVLFHDTAADVYFLIGSTVDTDRTQVHSDGQTYPYVALDVSSASHPVYTGQQRKTTVEGRVAGFNKRFAGFQATR.

Belongs to the bacterial ribosomal protein bL31 family. Type B subfamily. As to quaternary structure, part of the 50S ribosomal subunit.

This chain is Large ribosomal subunit protein bL31B, found in Pseudomonas entomophila (strain L48).